Here is a 303-residue protein sequence, read N- to C-terminus: Diaminopimelate epimerase (303 aa).

The substrate site is built by N15, Q47, and N67. C76 functions as the Proton donor in the catalytic mechanism. Substrate contacts are provided by residues 77–78, N163, N197, and 215–216; these read GN and ER. C224 (proton acceptor) is an active-site residue. A substrate-binding site is contributed by 225–226; that stretch reads GS. The segment at 278 to 303 is disordered; that stretch reads FDPATGEWSRDTQGLQGSGNADRGAA.

Belongs to the diaminopimelate epimerase family. In terms of assembly, homodimer.

It localises to the cytoplasm. The enzyme catalyses (2S,6S)-2,6-diaminopimelate = meso-2,6-diaminopimelate. Its pathway is amino-acid biosynthesis; L-lysine biosynthesis via DAP pathway; DL-2,6-diaminopimelate from LL-2,6-diaminopimelate: step 1/1. Its function is as follows. Catalyzes the stereoinversion of LL-2,6-diaminopimelate (L,L-DAP) to meso-diaminopimelate (meso-DAP), a precursor of L-lysine and an essential component of the bacterial peptidoglycan. The chain is Diaminopimelate epimerase from Brucella melitensis biotype 1 (strain ATCC 23456 / CCUG 17765 / NCTC 10094 / 16M).